The chain runs to 238 residues: tRNA (guanine-N(7)-)-methyltransferase (238 aa).

The S-adenosyl-L-methionine site is built by E68, E93, D120, and D143. Residue D143 is part of the active site. Residues K147, D179, and 216–219 each bind substrate; that span reads TKFE.

It belongs to the class I-like SAM-binding methyltransferase superfamily. TrmB family.

The catalysed reaction is guanosine(46) in tRNA + S-adenosyl-L-methionine = N(7)-methylguanosine(46) in tRNA + S-adenosyl-L-homocysteine. The protein operates within tRNA modification; N(7)-methylguanine-tRNA biosynthesis. In terms of biological role, catalyzes the formation of N(7)-methylguanine at position 46 (m7G46) in tRNA. The sequence is that of tRNA (guanine-N(7)-)-methyltransferase from Shewanella woodyi (strain ATCC 51908 / MS32).